A 621-amino-acid chain; its full sequence is Microbial serine proteinase (621 aa).

The N-terminal stretch at 1–24 (MRKTSLALAISALLSALPIASVQA) is a signal peptide. The Peptidase S8 domain maps to 68-440 (PRGGMAGNDL…FGLVDVNKTQ (373 aa)). The active-site Charge relay system is aspartate 98. Residues 114-133 (PGSKNVVTGGSDPTPTDPDR) are disordered. Catalysis depends on charge relay system residues histidine 137 and serine 354. In terms of domain architecture, P/Homo B spans 454-619 (AVALAKGKGN…GYSVLGHDAA (166 aa)). Positions 457–485 (LAKGKGNGRSPSAPSRYVGSSPTRSSTQV) are disordered. The span at 465-485 (RSPSAPSRYVGSSPTRSSTQV) shows a compositional bias: polar residues.

The protein belongs to the peptidase S8 family.

Its function is as follows. Agent of furonculosis. In Aeromonas salmonicida, this protein is Microbial serine proteinase (aspA).